A 96-amino-acid chain; its full sequence is ATP-dependent Clp protease adapter protein ClpS (96 aa).

Belongs to the ClpS family. Binds to the N-terminal domain of the chaperone ClpA.

Its function is as follows. Involved in the modulation of the specificity of the ClpAP-mediated ATP-dependent protein degradation. In Streptomyces coelicolor (strain ATCC BAA-471 / A3(2) / M145), this protein is ATP-dependent Clp protease adapter protein ClpS.